Here is a 182-residue protein sequence, read N- to C-terminus: Protein Syd (182 aa).

The protein belongs to the Syd family.

The protein localises to the cell inner membrane. Interacts with the SecY protein in vivo. May bind preferentially to an uncomplexed state of SecY, thus functioning either as a chelating agent for excess SecY in the cell or as a regulatory factor that negatively controls the translocase function. This Aeromonas salmonicida (strain A449) protein is Protein Syd.